Reading from the N-terminus, the 465-residue chain is Cysteine--tRNA ligase (465 aa).

C27 lines the Zn(2+) pocket. Residues 29–39 (PTTYNYIHIGN) carry the 'HIGH' region motif. Zn(2+) contacts are provided by C207, H232, and E236. The 'KMSKS' region motif lies at 264–268 (KMSKS). ATP is bound at residue K267.

Belongs to the class-I aminoacyl-tRNA synthetase family. Monomer. Zn(2+) is required as a cofactor.

It is found in the cytoplasm. The enzyme catalyses tRNA(Cys) + L-cysteine + ATP = L-cysteinyl-tRNA(Cys) + AMP + diphosphate. The protein is Cysteine--tRNA ligase of Carboxydothermus hydrogenoformans (strain ATCC BAA-161 / DSM 6008 / Z-2901).